Consider the following 383-residue polypeptide: ATP phosphoribosyltransferase regulatory subunit (383 aa).

It belongs to the class-II aminoacyl-tRNA synthetase family. HisZ subfamily. Heteromultimer composed of HisG and HisZ subunits.

It localises to the cytoplasm. The protein operates within amino-acid biosynthesis; L-histidine biosynthesis; L-histidine from 5-phospho-alpha-D-ribose 1-diphosphate: step 1/9. In terms of biological role, required for the first step of histidine biosynthesis. May allow the feedback regulation of ATP phosphoribosyltransferase activity by histidine. The sequence is that of ATP phosphoribosyltransferase regulatory subunit from Cupriavidus taiwanensis (strain DSM 17343 / BCRC 17206 / CCUG 44338 / CIP 107171 / LMG 19424 / R1) (Ralstonia taiwanensis (strain LMG 19424)).